The sequence spans 67 residues: Large ribosomal subunit protein bL35 (67 aa).

The protein belongs to the bacterial ribosomal protein bL35 family.

The protein is Large ribosomal subunit protein bL35 of Agrobacterium fabrum (strain C58 / ATCC 33970) (Agrobacterium tumefaciens (strain C58)).